We begin with the raw amino-acid sequence, 214 residues long: Inner membrane-spanning protein YciB (214 aa).

5 consecutive transmembrane segments (helical) span residues 11-31 (ILFF…VAII), 50-70 (MHII…ILQD), 81-101 (VNWG…KPII), 119-139 (LSYM…YVAY), and 149-169 (FKLF…GVYI).

Belongs to the YciB family.

The protein resides in the cell inner membrane. In terms of biological role, plays a role in cell envelope biogenesis, maintenance of cell envelope integrity and membrane homeostasis. The polypeptide is Inner membrane-spanning protein YciB (Hydrogenovibrio crunogenus (strain DSM 25203 / XCL-2) (Thiomicrospira crunogena)).